The chain runs to 1071 residues: ATP-dependent helicase/deoxyribonuclease subunit B (1071 aa).

This sequence belongs to the helicase family. AddB/RexB type 2 subfamily. As to quaternary structure, heterodimer of AddA and RexB. Mg(2+) is required as a cofactor.

Functionally, the heterodimer acts as both an ATP-dependent DNA helicase and an ATP-dependent, dual-direction single-stranded exonuclease. Recognizes the chi site generating a DNA molecule suitable for the initiation of homologous recombination. This subunit has 5' -&gt; 3' nuclease activity but not helicase activity. The sequence is that of ATP-dependent helicase/deoxyribonuclease subunit B from Streptococcus pyogenes serotype M4 (strain MGAS10750).